Consider the following 503-residue polypeptide: Cytochrome P450 3A15 (503 aa).

C442 provides a ligand contact to heme.

It belongs to the cytochrome P450 family. It depends on heme as a cofactor.

It is found in the endoplasmic reticulum membrane. The protein resides in the microsome membrane. It catalyses the reaction an organic molecule + reduced [NADPH--hemoprotein reductase] + O2 = an alcohol + oxidized [NADPH--hemoprotein reductase] + H2O + H(+). Its function is as follows. Cytochromes P450 are a group of heme-thiolate monooxygenases. In liver microsomes, this enzyme is involved in an NADPH-dependent electron transport pathway. It oxidizes a variety of structurally unrelated compounds, including steroids, fatty acids, and xenobiotics. This is Cytochrome P450 3A15 (CYP3A15) from Cavia porcellus (Guinea pig).